The primary structure comprises 397 residues: MIIKPRVRGFICVTAHPVGCEANVKEQIDYVTQHGVIEGGPKKVLVLGASTGYGLAARISAAFGCGADTLGVFFEKEGEEGKLSSAGWYNSAAFEKFAVEKGLYAKSINGDAFSDEIKRLTIETIKKDLGKIDLVVYSLAAPRRTDPQGVVHTSTLKPIGKAVTLRGINTDKGVVVDTTLEPATQEEIDGTVKVMGGEDWQLWIDALRDADVLAEGAKTTAFTYLGEKLTQDIYWNGSIGEAKKDLDKKVLTLRDNLAALKGDARVSVLKAVVTQASSAIPIMPLYLSLLFKVMKEQGTHEGCIEQVYGLFKDSLYGSEPKLDADGRLRADLAELEPKVQDAVAALWNQVTDDNVNEISDFAGYKAEFLRLFGFEIDGVDYDADVNPTVKINGLISA.

NAD(+) contacts are provided by residues 48-53, 74-75, 111-112, and 139-140; these read GASTGY, FE, DA, and LA. Tyr-224 serves as a coordination point for substrate. Tyr-234 serves as the catalytic Proton donor. NAD(+) contacts are provided by residues Lys-243 and 272 to 274; that span reads VVT.

It belongs to the TER reductase family. Monomer.

It catalyses the reaction a 2,3-saturated acyl-[ACP] + NAD(+) = a (2E)-enoyl-[ACP] + NADH + H(+). It participates in lipid metabolism; fatty acid biosynthesis. Its function is as follows. Involved in the final reduction of the elongation cycle of fatty acid synthesis (FAS II). Catalyzes the reduction of a carbon-carbon double bond in an enoyl moiety that is covalently linked to an acyl carrier protein (ACP). The polypeptide is Enoyl-[acyl-carrier-protein] reductase [NADH] (Pseudomonas fluorescens (strain SBW25)).